The following is a 346-amino-acid chain: GTPase Obg (346 aa).

Residues 1–158 enclose the Obg domain; sequence MFIDKAKIYV…RWIELELKLL (158 aa). One can recognise an OBG-type G domain in the interval 159 to 330; that stretch reads ADVGIIGFPN…LINLIRETRD (172 aa). GTP contacts are provided by residues 165–172, 190–194, 212–215, 282–285, and 311–313; these read GFPNAGKS, FTTLT, DIPG, NKID, and SLI. Mg(2+) contacts are provided by Ser-172 and Thr-192.

This sequence belongs to the TRAFAC class OBG-HflX-like GTPase superfamily. OBG GTPase family. In terms of assembly, monomer. Mg(2+) is required as a cofactor.

The protein localises to the cytoplasm. Functionally, an essential GTPase which binds GTP, GDP and possibly (p)ppGpp with moderate affinity, with high nucleotide exchange rates and a fairly low GTP hydrolysis rate. Plays a role in control of the cell cycle, stress response, ribosome biogenesis and in those bacteria that undergo differentiation, in morphogenesis control. In Sulfurihydrogenibium sp. (strain YO3AOP1), this protein is GTPase Obg.